The sequence spans 952 residues: Serine/threonine-protein kinase atg1 (952 aa).

One can recognise a Protein kinase domain in the interval 23 to 329 (FTINEQIGKG…FPEYFAHPVV (307 aa)). ATP contacts are provided by residues 29–37 (IGKGSFATV) and Lys-52. Catalysis depends on Asp-166, which acts as the Proton acceptor. Disordered stretches follow at residues 331 to 478 (EPIP…EAEQ), 510 to 573 (GRAN…SSPS), 783 to 806 (RLPEDHPGHPNNRSTASRLVGGSS), and 920 to 952 (AIAKHQSMPPPSSSPRRSYSGGTTPTINNTPPK). 2 stretches are compositionally biased toward basic and acidic residues: residues 338-347 (GDDRPKEKSP) and 356-372 (SLRDRQRESPTVKHIDT). Over residues 386–398 (SPRTPNIESNQPF) the composition is skewed to polar residues. Positions 429–439 (PRQRDRKDRTE) are enriched in basic and acidic residues. Polar residues-rich tracts occupy residues 459–475 (ANLQPKNEVQSSNSITE), 553–573 (PDTSSARNSYGSYGKTGSSPS), and 793–806 (NNRSTASRLVGGSS). A compositionally biased stretch (low complexity) spans 933-952 (SPRRSYSGGTTPTINNTPPK).

It belongs to the protein kinase superfamily. Ser/Thr protein kinase family. APG1/unc-51/ULK1 subfamily. Homodimer. Forms a ternary complex with ATG13 and ATG17.

It localises to the cytoplasm. The protein resides in the preautophagosomal structure membrane. It catalyses the reaction L-seryl-[protein] + ATP = O-phospho-L-seryl-[protein] + ADP + H(+). The enzyme catalyses L-threonyl-[protein] + ATP = O-phospho-L-threonyl-[protein] + ADP + H(+). Its function is as follows. Serine/threonine protein kinase involved in the cytoplasm to vacuole transport (Cvt) and found to be essential in autophagy, where it is required for the formation of autophagosomes. Involved in the clearance of protein aggregates which cannot be efficiently cleared by the proteasome. Required for selective autophagic degradation of the nucleus (nucleophagy) as well as for mitophagy which contributes to regulate mitochondrial quantity and quality by eliminating the mitochondria to a basal level to fulfill cellular energy requirements and preventing excess ROS production. Also involved in endoplasmic reticulum-specific autophagic process, in selective removal of ER-associated degradation (ERAD) substrates. Plays a key role in ATG9 and ATG23 cycling through the pre-autophagosomal structure and is necessary to promote ATG18 binding to ATG9 through phosphorylation of ATG9. Catalyzes phosphorylation of ATG4, decreasing the interaction between ATG4 and ATG8 and impairing deconjugation of PE-conjugated forms of ATG8. The sequence is that of Serine/threonine-protein kinase atg1 from Botryotinia fuckeliana (strain B05.10) (Noble rot fungus).